The following is a 125-amino-acid chain: HQRVTLNDGHSIPVLGFITYAPDEVIKPGEEMFPTDEHGKSIGVSNFNHKRVXNQVEXHPYLNQSKDIVLVAYSALGSSRDPWKQSPALIALRYQLQRGVVVLAKSFIEREIKVFGFQLSSEDMK.

Residues 9–18 (GHSIPVLGFI) and 74–111 (SALGSSRDPWKQSPALIALRYQLQRGVVVLAKSFIERE) contribute to the NADP(+) site.

Belongs to the aldo/keto reductase family. Monomer. Post-translationally, the N-terminus is blocked.

Its subcellular location is the cytoplasm. The catalysed reaction is morphine + NAD(+) = morphinone + NADH + H(+). It carries out the reaction morphine + NADP(+) = morphinone + NADPH + H(+). Its activity is regulated as follows. Strongly inhibited by sulfhydryl reagents and quercetin, but not by pyrazole, barbital and indomethacine. Its function is as follows. Catalyzes the dehydrogenation of morphine to morphinone. Uses both NAD and NADP, but the activity is much greater with NAD than with NADP. The sequence is that of Morphine 6-dehydrogenase from Oryctolagus cuniculus (Rabbit).